The primary structure comprises 325 residues: Outer spore wall protein LDS1 (325 aa).

The Cytoplasmic portion of the chain corresponds to 1-91 (MSFTGSLALA…NTNKSSYSTT (91 aa)). The chain crosses the membrane as a helical span at residues 92–112 (MLGILSSYLIMFALVSFVYWA). The Extracellular segment spans residues 113–118 (TITPMY). Residues 119 to 139 (TAFLIVLGPIGLFIAIFHSFL) traverse the membrane as a helical segment. At 140 to 208 (QANVFTLLFM…VKYMLGLSVL (69 aa)) the chain is on the cytoplasmic side. The chain crosses the membrane as a helical span at residues 209-229 (FVLLVISFFPLIGPILFHILI). Residues 230-263 (SPFITQIYFTKVLRLQNFDNIQRRENIYLHAGQY) lie on the Extracellular side of the membrane. Residues 264-284 (ASFGFLAGLIESVPILAGFAI) traverse the membrane as a helical segment. The Cytoplasmic portion of the chain corresponds to 285–325 (STNTIGSVLFNLDHPMVPENLVETQAEIEAAPQDINQQPNQ).

Belongs to the LDS family.

The protein localises to the prospore membrane. The protein resides in the lipid droplet. It localises to the spore wall. Involved in spore wall assembly. The polypeptide is Outer spore wall protein LDS1 (Saccharomyces cerevisiae (strain ATCC 204508 / S288c) (Baker's yeast)).